Reading from the N-terminus, the 378-residue chain is Actin-related protein 2/3 complex subunit 1A (378 aa).

7 WD repeats span residues 8–47, 53–92, 97–138, 143–182, 203–242, 257–295, and 331–375; these read RFAE…HWER, KHDQ…WVPT, RLNR…WVSK, RHES…VDTK, LSYS…PLAQ, ISEK…KAAS, and VHDN…QELG.

This sequence belongs to the WD repeat ARPC1 family. As to quaternary structure, component of the Arp2/3 complex composed of ARP2, ARP3, ARPC1/p41-ARC, ARPC2/p34-ARC, ARPC3/p21-ARC, ARPC4/p20-ARC and ARPC5/p16-ARC. In terms of tissue distribution, expressed at low levels in all tissues with a relatively highest expression in inflorescences.

It is found in the cytoplasm. The protein localises to the cytoskeleton. Its function is as follows. Functions as a component of the Arp2/3 complex which is involved in regulation of actin polymerization and together with an activating nucleation-promoting factor (NPF) mediates the formation of branched actin networks. Arp2/3 complex plays a critical role in the control of cell morphogenesis via the modulation of cell polarity development. This chain is Actin-related protein 2/3 complex subunit 1A (ARPC1A), found in Arabidopsis thaliana (Mouse-ear cress).